The chain runs to 202 residues: Protein U22 (202 aa).

Transmembrane regions (helical) follow at residues 5 to 25 (GWSL…LHII) and 172 to 192 (FVYY…SCWF).

The protein localises to the host membrane. This chain is Protein U22 (U22), found in Human herpesvirus 6B (strain Z29) (HHV-6 variant B).